The sequence spans 145 residues: L-alanine exporter AlaE (145 aa).

Helical transmembrane passes span 16–36, 42–62, 86–106, and 111–131; these read FALV…LSGM, LSSR…YGLY, LFAY…VIGA, and ILTA…TYGY.

Belongs to the AlaE exporter family.

Its subcellular location is the cell inner membrane. Functionally, exports L-alanine. The protein is L-alanine exporter AlaE of Pectobacterium parmentieri (strain WPP163) (Pectobacterium wasabiae (strain WPP163)).